The following is a 171-amino-acid chain: Superoxide dismutase [Cu-Zn] 2 (171 aa).

Positions 1–20 are cleaved as a signal peptide; that stretch reads MKKLSGVLAGSLLLISASFS. H67, H69, and H85 together coordinate Cu cation. C74 and C167 are disulfide-bonded. Positions 85, 93, 102, and 105 each coordinate Zn(2+). Residue H147 participates in Cu cation binding.

This sequence belongs to the Cu-Zn superoxide dismutase family. Requires Cu cation as cofactor. Zn(2+) serves as cofactor.

It carries out the reaction 2 superoxide + 2 H(+) = H2O2 + O2. Destroys radicals which are normally produced within the cells and which are toxic to biological systems. The sequence is that of Superoxide dismutase [Cu-Zn] 2 (sodC2) from Aquifex aeolicus (strain VF5).